We begin with the raw amino-acid sequence, 185 residues long: Anaphase-promoting complex subunit 10 (185 aa).

Position 2 is an N-acetylthreonine (Thr2). Positions 2-185 (TTPNKTPPGA…IDFMMYRSIR (184 aa)) constitute a DOC domain. Lys169 is subject to N6-acetyllysine.

Belongs to the APC10 family. In terms of assembly, the mammalian APC/C is composed at least of 14 distinct subunits ANAPC1, ANAPC2, CDC27/APC3, ANAPC4, ANAPC5, CDC16/APC6, ANAPC7, CDC23/APC8, ANAPC10, ANAPC11, CDC26/APC12, ANAPC13, ANAPC15 and ANAPC16 that assemble into a complex of at least 19 chains with a combined molecular mass of around 1.2 MDa; APC/C interacts with FZR1 and FBXO5. The C-terminus of APC10 binds to CDC27/APC3. Interacts with PIWIL1; interaction only takes place when PIWIL1 binds piRNA. Interacts with FBXO43; the interaction is direct.

It participates in protein modification; protein ubiquitination. Component of the anaphase promoting complex/cyclosome (APC/C), a cell cycle-regulated E3 ubiquitin ligase that controls progression through mitosis and the G1 phase of the cell cycle. The APC/C complex acts by mediating ubiquitination and subsequent degradation of target proteins: it mainly mediates the formation of 'Lys-11'-linked polyubiquitin chains and, to a lower extent, the formation of 'Lys-48'- and 'Lys-63'-linked polyubiquitin chains. The APC/C complex catalyzes assembly of branched 'Lys-11'-/'Lys-48'-linked branched ubiquitin chains on target proteins. In Homo sapiens (Human), this protein is Anaphase-promoting complex subunit 10 (ANAPC10).